Consider the following 267-residue polypeptide: 1-(5-phosphoribosyl)-5-[(5-phosphoribosylamino)methylideneamino] imidazole-4-carboxamide isomerase (267 aa).

The protein belongs to the HisA/HisF family.

The protein resides in the cytoplasm. It carries out the reaction 1-(5-phospho-beta-D-ribosyl)-5-[(5-phospho-beta-D-ribosylamino)methylideneamino]imidazole-4-carboxamide = 5-[(5-phospho-1-deoxy-D-ribulos-1-ylimino)methylamino]-1-(5-phospho-beta-D-ribosyl)imidazole-4-carboxamide. It participates in amino-acid biosynthesis; L-histidine biosynthesis; L-histidine from 5-phospho-alpha-D-ribose 1-diphosphate: step 4/9. The chain is 1-(5-phosphoribosyl)-5-[(5-phosphoribosylamino)methylideneamino] imidazole-4-carboxamide isomerase (HIS6) from Kluyveromyces lactis (strain ATCC 8585 / CBS 2359 / DSM 70799 / NBRC 1267 / NRRL Y-1140 / WM37) (Yeast).